The sequence spans 88 residues: Phosphocarrier protein HPr (88 aa).

In terms of domain architecture, HPr spans 1-88; that stretch reads MEQQSYTIID…DVLSKEGLTE (88 aa). H15 functions as the Pros-phosphohistidine intermediate in the catalytic mechanism. S46 carries the phosphoserine; by HPrK/P modification.

Belongs to the HPr family.

The protein localises to the cytoplasm. Its activity is regulated as follows. Phosphorylation on Ser-46 inhibits the phosphoryl transfer from enzyme I to HPr. Its function is as follows. General (non sugar-specific) component of the phosphoenolpyruvate-dependent sugar phosphotransferase system (sugar PTS). This major carbohydrate active-transport system catalyzes the phosphorylation of incoming sugar substrates concomitantly with their translocation across the cell membrane. The phosphoryl group from phosphoenolpyruvate (PEP) is transferred to the phosphoryl carrier protein HPr by enzyme I. Phospho-HPr then transfers it to the PTS EIIA domain. In terms of biological role, P-Ser-HPr interacts with the catabolite control protein A (CcpA), forming a complex that binds to DNA at the catabolite response elements cre, operator sites preceding a large number of catabolite-regulated genes. Thus, P-Ser-HPr is a corepressor in carbon catabolite repression (CCR), a mechanism that allows bacteria to coordinate and optimize the utilization of available carbon sources. P-Ser-HPr also plays a role in inducer exclusion, in which it probably interacts with several non-PTS permeases and inhibits their transport activity. In Staphylococcus carnosus, this protein is Phosphocarrier protein HPr (ptsH).